The sequence spans 745 residues: NAD(P)H-quinone oxidoreductase subunit 5, chloroplastic (745 aa).

Transmembrane regions (helical) follow at residues 9-29 (WIIP…LLLF), 50-70 (WAFP…DLSI), 99-119 (IDSL…FVLI), 135-155 (FAYM…CNLI), 157-177 (IYIF…FWFT), 194-214 (IGDF…GSFE), 229-249 (NEVH…GAVA), 268-288 (TPIS…FLVA), 290-310 (LFPL…IGII), 337-357 (LGYM…FHLI), 364-384 (ALLF…VGYS), 406-426 (IAFL…CFWS), 435-455 (WLYS…TAFY), 550-570 (LFPM…AIPF), 610-630 (FSVS…KPFY), and 724-744 (FYLL…YFIL).

The protein belongs to the complex I subunit 5 family. NDH is composed of at least 16 different subunits, 5 of which are encoded in the nucleus.

The protein localises to the plastid. The protein resides in the chloroplast thylakoid membrane. It catalyses the reaction a plastoquinone + NADH + (n+1) H(+)(in) = a plastoquinol + NAD(+) + n H(+)(out). The catalysed reaction is a plastoquinone + NADPH + (n+1) H(+)(in) = a plastoquinol + NADP(+) + n H(+)(out). NDH shuttles electrons from NAD(P)H:plastoquinone, via FMN and iron-sulfur (Fe-S) centers, to quinones in the photosynthetic chain and possibly in a chloroplast respiratory chain. The immediate electron acceptor for the enzyme in this species is believed to be plastoquinone. Couples the redox reaction to proton translocation, and thus conserves the redox energy in a proton gradient. The protein is NAD(P)H-quinone oxidoreductase subunit 5, chloroplastic (ndhF) of Gossypium barbadense (Sea Island cotton).